The chain runs to 383 residues: Chorismate synthase (383 aa).

Residues R39 and R45 each contribute to the NADP(+) site. FMN is bound by residues R128–S130, G291, K306–T310, and R332.

The protein belongs to the chorismate synthase family. Homotetramer. FMNH2 is required as a cofactor.

It catalyses the reaction 5-O-(1-carboxyvinyl)-3-phosphoshikimate = chorismate + phosphate. It functions in the pathway metabolic intermediate biosynthesis; chorismate biosynthesis; chorismate from D-erythrose 4-phosphate and phosphoenolpyruvate: step 7/7. In terms of biological role, catalyzes the anti-1,4-elimination of the C-3 phosphate and the C-6 proR hydrogen from 5-enolpyruvylshikimate-3-phosphate (EPSP) to yield chorismate, which is the branch point compound that serves as the starting substrate for the three terminal pathways of aromatic amino acid biosynthesis. This reaction introduces a second double bond into the aromatic ring system. In Thermus thermophilus (strain ATCC BAA-163 / DSM 7039 / HB27), this protein is Chorismate synthase.